The chain runs to 506 residues: Maturase K (506 aa).

This sequence belongs to the intron maturase 2 family. MatK subfamily.

The protein localises to the plastid. Its subcellular location is the chloroplast. Functionally, usually encoded in the trnK tRNA gene intron. Probably assists in splicing its own and other chloroplast group II introns. This Angiopteris evecta (Mule's foot fern) protein is Maturase K.